Here is a 202-residue protein sequence, read N- to C-terminus: Small ribosomal subunit protein uS3 (202 aa).

A KH type-2 domain is found at 18 to 87 (LNEYLQRQLV…NPQIDVVEVP (70 aa)).

The protein belongs to the universal ribosomal protein uS3 family. Part of the 30S ribosomal subunit.

Functionally, binds the lower part of the 30S subunit head. This chain is Small ribosomal subunit protein uS3, found in Thermofilum pendens (strain DSM 2475 / Hrk 5).